The following is a 350-amino-acid chain: Ion-translocating oxidoreductase complex subunit D (350 aa).

3 helical membrane passes run 25 to 45 (ILCA…GTVI), 89 to 109 (IPPL…IVIV), and 129 to 149 (VMLL…SVIA). Thr-185 carries the FMN phosphoryl threonine modification. 5 helical membrane passes run 212 to 232 (GFGV…LVML), 239 to 259 (WHIT…GYLL), 264 to 284 (FTGP…FFIA), 298 to 318 (LVFG…GGYP), and 319 to 339 (DAFA…DHYM).

Belongs to the NqrB/RnfD family. The complex is composed of six subunits: RnfA, RnfB, RnfC, RnfD, RnfE and RnfG. FMN is required as a cofactor.

The protein localises to the cell inner membrane. In terms of biological role, part of a membrane-bound complex that couples electron transfer with translocation of ions across the membrane. This Shewanella sediminis (strain HAW-EB3) protein is Ion-translocating oxidoreductase complex subunit D.